We begin with the raw amino-acid sequence, 336 residues long: Peroxidase 72 (336 aa).

Positions 1–23 (MAKSLNILIAALSLIAFSPFCLC) are cleaved as a signal peptide. 4 disulfides stabilise this stretch: cysteine 42–cysteine 122, cysteine 75–cysteine 80, cysteine 128–cysteine 329, and cysteine 207–cysteine 239. Histidine 73 serves as the catalytic Proton acceptor. Residues aspartate 74, valine 77, glycine 79, aspartate 81, and serine 83 each coordinate Ca(2+). Proline 170 contacts substrate. Residue asparagine 173 is glycosylated (N-linked (GlcNAc...) asparagine). Residue histidine 200 participates in heme b binding. Residue threonine 201 coordinates Ca(2+). An N-linked (GlcNAc...) asparagine glycan is attached at asparagine 216. Aspartate 252, threonine 255, and aspartate 260 together coordinate Ca(2+).

This sequence belongs to the peroxidase family. Classical plant (class III) peroxidase subfamily. Requires heme b as cofactor. Ca(2+) is required as a cofactor. In terms of tissue distribution, slightly expressed in roots.

It is found in the secreted. It carries out the reaction 2 a phenolic donor + H2O2 = 2 a phenolic radical donor + 2 H2O. Functionally, removal of H(2)O(2), oxidation of toxic reductants, biosynthesis and degradation of lignin, suberization, auxin catabolism, response to environmental stresses such as wounding, pathogen attack and oxidative stress. These functions might be dependent on each isozyme/isoform in each plant tissue. The protein is Peroxidase 72 (PER72) of Arabidopsis thaliana (Mouse-ear cress).